The chain runs to 236 residues: Phosphoribosylaminoimidazole-succinocarboxamide synthase (236 aa).

The protein belongs to the SAICAR synthetase family.

The catalysed reaction is 5-amino-1-(5-phospho-D-ribosyl)imidazole-4-carboxylate + L-aspartate + ATP = (2S)-2-[5-amino-1-(5-phospho-beta-D-ribosyl)imidazole-4-carboxamido]succinate + ADP + phosphate + 2 H(+). It functions in the pathway purine metabolism; IMP biosynthesis via de novo pathway; 5-amino-1-(5-phospho-D-ribosyl)imidazole-4-carboxamide from 5-amino-1-(5-phospho-D-ribosyl)imidazole-4-carboxylate: step 1/2. This Pseudomonas putida (strain ATCC 700007 / DSM 6899 / JCM 31910 / BCRC 17059 / LMG 24140 / F1) protein is Phosphoribosylaminoimidazole-succinocarboxamide synthase.